Reading from the N-terminus, the 207-residue chain is Casparian strip membrane protein 1 (207 aa).

The span at 1-12 shows a compositional bias: polar residues; sequence MEADSTTINVTE. A disordered region spans residues 1 to 20; the sequence is MEADSTTINVTETPKERKGK. The Cytoplasmic portion of the chain corresponds to 1 to 48; the sequence is MEADSTTINVTETPKERKGKAPLLAAPPASSGVKRVLQKAPKGGYKRG. A helical transmembrane segment spans residues 49–69; the sequence is LAVFDVVLRLAGIATALGAAI. Over 70 to 98 the chain is Extracellular; it reads AMGSTDQTLPFFTQFFQFKAEFDDLPAFT. The chain crosses the membrane as a helical span at residues 99–119; the sequence is FFVIANAITAAYLALTIPISI. Residues 120-131 are Cytoplasmic-facing; sequence VCIIRPHLVAPR. The helical transmembrane segment at 132-152 threads the bilayer; it reads VLLIFLDTVMVALTTAAAGGT. Over 153–184 the chain is Extracellular; that stretch reads ASIVYLAHNGNSDANWPAICQQFNDXCQKVSG. The helical transmembrane segment at 185-205 threads the bilayer; it reads AVVASFLTVVVLMLLIVLSAF. Over 206 to 207 the chain is Cytoplasmic; that stretch reads AL.

It belongs to the Casparian strip membrane proteins (CASP) family. As to quaternary structure, homodimer and heterodimers.

It localises to the cell membrane. In terms of biological role, regulates membrane-cell wall junctions and localized cell wall deposition. Required for establishment of the Casparian strip membrane domain (CSD) and the subsequent formation of Casparian strips, a cell wall modification of the root endodermis that determines an apoplastic barrier between the intraorganismal apoplasm and the extraorganismal apoplasm and prevents lateral diffusion. This is Casparian strip membrane protein 1 from Cynara cardunculus var. scolymus (Globe artichoke).